We begin with the raw amino-acid sequence, 211 residues long: Transmembrane protein 247 (211 aa).

Basic and acidic residues-rich tracts occupy residues 1 to 10 and 31 to 45; these read MAMEDREVME and PEGK…EVPK. The interval 1-90 is disordered; sequence MAMEDREVME…AGDGPGLESV (90 aa). Residues 63-73 are compositionally biased toward pro residues; the sequence is PGPPRSLPPKS. Residues 119–148 adopt a coiled-coil conformation; sequence KYLHQENERQRQHEEVMEQLQQQQQQQQAL. Helical transmembrane passes span 159–179 and 186–206; these read LLLP…IHII and VFFL…LCLI.

The protein localises to the membrane. This chain is Transmembrane protein 247 (Tmem247), found in Mus musculus (Mouse).